Here is a 73-residue protein sequence, read N- to C-terminus: Beta-defensin 39 (73 aa).

The signal sequence occupies residues 1–23; sequence MKISCFLLLVLSLSCFQINSVSG. 3 disulfide bridges follow: Cys29/Cys58, Cys36/Cys51, and Cys41/Cys59.

Belongs to the beta-defensin family.

The protein localises to the secreted. Has antibacterial activity. In Rattus norvegicus (Rat), this protein is Beta-defensin 39 (Defb39).